Here is a 403-residue protein sequence, read N- to C-terminus: Phosphoserine phosphatase RsbP (403 aa).

In terms of domain architecture, PAS spans 1–42 (MDKQLNDAPCGFLALSEEGSIIAANRTLIKILDYEPEQVIGQ). The PPM-type phosphatase domain maps to 191–402 (QVQIDSYYNA…DDECFILVDV (212 aa)).

Mn(2+) serves as cofactor.

It catalyses the reaction O-phospho-L-serine + H2O = L-serine + phosphate. The catalysed reaction is O-phospho-D-serine + H2O = D-serine + phosphate. Functionally, positive regulator of sigma-B activity. Dephosphorylates RsbV in response to energy stress. In Bacillus subtilis (strain 168), this protein is Phosphoserine phosphatase RsbP (rsbP).